We begin with the raw amino-acid sequence, 269 residues long: Protein OPG079 (269 aa).

Belongs to the orthopoxvirus OPG079 family. In terms of assembly, homoomultimer (Potential). Interacts with the small subunit of ribonucleotide reductase. Interacts with host FAM111A; this interaction protomtes OPG079 degradation through autophagy.

The protein localises to the host cytoplasm. Plays an essential role in viral DNA replication. Binds to ssDNA with high affinity and localizes to cytoplasmic factories where nascent viral genomes accumulate. May disrupt loops, hairpins and other secondary structures present on ssDNA to reduce and eliminate pausing of viral DNA polymerase at specific sites during elongation. This Variola virus (isolate Human/India/Ind3/1967) (VARV) protein is Protein OPG079 (OPG079).